Here is a 419-residue protein sequence, read N- to C-terminus: Serine--tRNA ligase (419 aa).

Residues 45 to 66 (ADSLRAEQKAASKSVGGASPEE) form a disordered region. An L-serine-binding site is contributed by 226–228 (TSE). ATP contacts are provided by residues 257-259 (RRE) and valine 273. Glutamate 280 contributes to the L-serine binding site. 344 to 347 (ELTS) is an ATP binding site. Threonine 379 contributes to the L-serine binding site.

This sequence belongs to the class-II aminoacyl-tRNA synthetase family. Type-1 seryl-tRNA synthetase subfamily. Homodimer. The tRNA molecule binds across the dimer.

It localises to the cytoplasm. The enzyme catalyses tRNA(Ser) + L-serine + ATP = L-seryl-tRNA(Ser) + AMP + diphosphate + H(+). The catalysed reaction is tRNA(Sec) + L-serine + ATP = L-seryl-tRNA(Sec) + AMP + diphosphate + H(+). The protein operates within aminoacyl-tRNA biosynthesis; selenocysteinyl-tRNA(Sec) biosynthesis; L-seryl-tRNA(Sec) from L-serine and tRNA(Sec): step 1/1. Catalyzes the attachment of serine to tRNA(Ser). Is also able to aminoacylate tRNA(Sec) with serine, to form the misacylated tRNA L-seryl-tRNA(Sec), which will be further converted into selenocysteinyl-tRNA(Sec). The chain is Serine--tRNA ligase from Mycobacterium ulcerans (strain Agy99).